Consider the following 1679-residue polypeptide: Probable myosin heavy chain ECU04_1000 (1679 aa).

Over residues 1-14 (MEGTTNKDIGSGSS) the composition is skewed to polar residues. The disordered stretch occupies residues 1 to 22 (MEGTTNKDIGSGSSRPGGEVSV). Residues 31–79 (MEKKWVWAPSSKEAYVCGFVVKEEGDVLEIDCRGVIVRHKSCEVFRMNP) enclose the Myosin N-terminal SH3-like domain. The region spanning 83-754 (DMVDDLAELS…VLADIEDMRD (672 aa)) is the Myosin motor domain. Position 176 to 183 (176 to 183 (GESGAGKT)) interacts with ATP. Residues 624–646 (LASLMSELRRTNPHFVRCIIPNL) are actin-binding. Residues 823–1644 (GEMKEKEAMI…SKMLEMKKKL (822 aa)) adopt a coiled-coil conformation.

It belongs to the TRAFAC class myosin-kinesin ATPase superfamily. Myosin family.

Cellular myosin that appears to play a role in cytokinesis, cell shape, and specialized functions such as secretion and capping. In Encephalitozoon cuniculi (strain GB-M1) (Microsporidian parasite), this protein is Probable myosin heavy chain ECU04_1000.